The sequence spans 562 residues: Actin-related protein 8 (562 aa).

248–251 (DVGD) contacts ATP.

It belongs to the actin family. ARP8 subfamily. Component of the chromatin remodeling Ino80 complex. Exists as monomers and dimers, but the dimer is most probably the biologically relevant form required for stable interactions with histones that exploits the twofold symmetry of the nucleosome core.

The protein localises to the nucleus. Its function is as follows. Plays an important role in the functional organization of mitotic chromosomes. Exhibits low basal ATPase activity, and unable to polymerize. In terms of biological role, proposed core component of the chromatin remodeling INO80 complex which is involved in transcriptional regulation, DNA replication and probably DNA repair. Strongly prefer nucleosomes and H3-H4 tetramers over H2A-H2B dimers, suggesting it may act as a nucleosome recognition module within the complex. The polypeptide is Actin-related protein 8 (Aedes aegypti (Yellowfever mosquito)).